A 342-amino-acid polypeptide reads, in one-letter code: Phosphate acyltransferase (342 aa).

Belongs to the PlsX family. As to quaternary structure, homodimer. Probably interacts with PlsY.

The protein localises to the cytoplasm. It catalyses the reaction a fatty acyl-[ACP] + phosphate = an acyl phosphate + holo-[ACP]. It functions in the pathway lipid metabolism; phospholipid metabolism. Functionally, catalyzes the reversible formation of acyl-phosphate (acyl-PO(4)) from acyl-[acyl-carrier-protein] (acyl-ACP). This enzyme utilizes acyl-ACP as fatty acyl donor, but not acyl-CoA. In Actinobacillus succinogenes (strain ATCC 55618 / DSM 22257 / CCUG 43843 / 130Z), this protein is Phosphate acyltransferase.